The following is a 152-amino-acid chain: Endoribonuclease YbeY (152 aa).

3 residues coordinate Zn(2+): H118, H122, and H128.

The protein belongs to the endoribonuclease YbeY family. It depends on Zn(2+) as a cofactor.

Its subcellular location is the cytoplasm. Single strand-specific metallo-endoribonuclease involved in late-stage 70S ribosome quality control and in maturation of the 3' terminus of the 16S rRNA. This is Endoribonuclease YbeY from Lacticaseibacillus casei (strain BL23) (Lactobacillus casei).